A 132-amino-acid polypeptide reads, in one-letter code: Large ribosomal subunit protein bL19 (132 aa).

Belongs to the bacterial ribosomal protein bL19 family.

Functionally, this protein is located at the 30S-50S ribosomal subunit interface and may play a role in the structure and function of the aminoacyl-tRNA binding site. The chain is Large ribosomal subunit protein bL19 from Nitrosomonas europaea (strain ATCC 19718 / CIP 103999 / KCTC 2705 / NBRC 14298).